Here is a 39-residue protein sequence, read N- to C-terminus: Photosystem II reaction center protein J (39 aa).

A helical membrane pass occupies residues 9–29; sequence LWLVATVGGMAAITVLGIFIY.

The protein belongs to the PsbJ family. As to quaternary structure, PSII is composed of 1 copy each of membrane proteins PsbA, PsbB, PsbC, PsbD, PsbE, PsbF, PsbH, PsbI, PsbJ, PsbK, PsbL, PsbM, PsbT, PsbX, PsbY, PsbZ, Psb30/Ycf12, at least 3 peripheral proteins of the oxygen-evolving complex and a large number of cofactors. It forms dimeric complexes.

It localises to the plastid. It is found in the chloroplast thylakoid membrane. Functionally, one of the components of the core complex of photosystem II (PSII). PSII is a light-driven water:plastoquinone oxidoreductase that uses light energy to abstract electrons from H(2)O, generating O(2) and a proton gradient subsequently used for ATP formation. It consists of a core antenna complex that captures photons, and an electron transfer chain that converts photonic excitation into a charge separation. The chain is Photosystem II reaction center protein J from Porphyra purpurea (Red seaweed).